A 648-amino-acid polypeptide reads, in one-letter code: Replication restart protein PriA (648 aa).

Residues 131–297 (TILNESNKPT…KTHKYQLVTL (167 aa)) form the Helicase ATP-binding domain. 144–151 (GVTGSGKT) is a binding site for ATP. Residues 240–243 (DEEH) carry the DEAH box motif. The Zn(2+) site is built by Cys-358, Cys-361, Cys-367, Cys-370, Cys-385, Cys-388, Cys-398, and Cys-401. In terms of domain architecture, Helicase C-terminal spans 375–548 (VLHKATKKLE…RFFTNELEIR (174 aa)).

The protein belongs to the helicase family. PriA subfamily. In terms of assembly, component of the replication restart primosome. Zn(2+) serves as cofactor.

The enzyme catalyses Couples ATP hydrolysis with the unwinding of duplex DNA by translocating in the 3'-5' direction.. It catalyses the reaction ATP + H2O = ADP + phosphate + H(+). Its function is as follows. Initiates the restart of stalled replication forks, which reloads the replicative helicase on sites other than the origin of replication. Recognizes and binds to abandoned replication forks and remodels them to uncover a helicase loading site. Promotes assembly of the primosome at these replication forks. The sequence is that of Replication restart protein PriA from Rickettsia prowazekii (strain Madrid E).